The following is a 172-amino-acid chain: Bifunctional protein PyrR (172 aa).

The PRPP-binding motif lies at 90–102 (LVLVDDVLMSGRT).

This sequence belongs to the purine/pyrimidine phosphoribosyltransferase family. PyrR subfamily.

The catalysed reaction is UMP + diphosphate = 5-phospho-alpha-D-ribose 1-diphosphate + uracil. Its function is as follows. Regulates the transcription of the pyrimidine nucleotide (pyr) operon in response to exogenous pyrimidines. Functionally, also displays a weak uracil phosphoribosyltransferase activity which is not physiologically significant. The polypeptide is Bifunctional protein PyrR (Pseudomonas putida (strain GB-1)).